The primary structure comprises 415 residues: Palmitoyl-acyl carrier protein thioesterase, chloroplastic (415 aa).

2 stretches are compositionally biased toward low complexity: residues 1–16 (MVATAASSAFFPLPSA) and 24–41 (KLGNKPSSLSPLKPKSTP). Residues 1 to 60 (MVATAASSAFFPLPSADTSSRPGKLGNKPSSLSPLKPKSTPNGGLQVKANASAPPKINGS) constitute a chloroplast transit peptide. Residues 1-81 (MVATAASSAF…QEDAHSAPPP (81 aa)) form a disordered region. Residues Asn-314, His-316, and Cys-351 contribute to the active site.

It belongs to the acyl-ACP thioesterase family.

It is found in the plastid. The protein resides in the chloroplast. The catalysed reaction is hexadecanoyl-[ACP] + H2O = hexadecanoate + holo-[ACP] + H(+). Plays an essential role in chain termination during de novo fatty acid synthesis. High thioesterase activity for palmitoyl-ACP versus other acyl-ACPs. This Cuphea hookeriana (Cigar plant) protein is Palmitoyl-acyl carrier protein thioesterase, chloroplastic (FATB1).